The primary structure comprises 484 residues: Gasdermin-D (484 aa).

Phosphotyrosine is present on Y37. C56 carries the post-translational modification S-(2-succinyl)cysteine. 2 beta stranded membrane passes run 91 to 97 and 103 to 108; these read QGSVELA and KIAGGA. A Phosphotyrosine modification is found at Y158. 2 beta stranded membrane-spanning segments follow: residues 180–186 and 191–197; these read GSGRFSL and CLQGEGQ. The residue at position 185 (S185) is a Phosphoserine. An S-(2-succinyl)cysteine mark is found at C191 and C268. Residue C191 is the site of S-palmitoyl cysteine attachment. The tract at residues 277–296 is linker helix loop; sequence VPAEGAFTEDFQGLRAEVET. C309 carries the post-translational modification S-(2-succinyl)cysteine. S338 is a glycosylation site (O-linked (GlcNAc) serine). C467 is subject to S-(2-succinyl)cysteine.

Belongs to the gasdermin family. Homooligomer; homooligomeric ring-shaped pore complex containing 27-28 subunits when inserted in the membrane. Homooligomerization is promoted by the mTORC1 complex in macrophages. In response to a canonical inflammasome stimulus, such as nigericin, recruited to NLRP3 inflammasone with similar kinetics to that of uncleaved CASP1 precursor. Although this recruitment is also observed in the absence of PYCARD, it is more efficient in its presence. Post-translationally, cleavage at Asp-275 by CASP1 (mature and uncleaved precursor forms), CASP4, CASP5 or CASP8 relieves autoinhibition and is sufficient to initiate pyroptosis. Cleavage by CASP1 and CASP4 is not strictly dependent on the consensus cleavage site on GSDMD but depends on an exosite interface on CASP1 that recognizes and binds the Gasdermin-D, C-terminal (GSDMD-CT) part. Cleavage by CASP8 takes place following inactivation of MAP3K7/TAK1 by Yersinia toxin YopJ. Cleavage at Asp-87 by CASP3 or CASP7 inactivates the ability to mediate pyroptosis, but generates the Gasdermin-D, p13 chain, which translocates to the nucleus and acts as a transcription regulator. Cleavage by papain allergen generates the Gasdermin-D, p40 chain. Palmitoylated at Cys-191 by ZDHHC5 and ZDHHC9 in response to microbial infection and danger signals. Palmitoylation takes place before cleavage by caspases (CASP1, CASP4, CASP5 or CASP8) and is required for membrane translocation and pore formation. Depalmitoylated by LYPLA2. In terms of processing, succination of Cys-191 by the Krebs cycle intermediate fumarate, which leads to S-(2-succinyl)cysteine residues, inhibits processing by caspases, and ability to initiate pyroptosis. Succination modification is catalyzed by a non-enzymatic reaction caused by an accumulation of fumarate. Post-translationally, glycosylated: O-GlcNAcylation by OGT leads to reduced cleavage by CASP4 and decreased LPS-induced endothelial cell pyroptosis. (Microbial infection) Cleaved and inactivated by Protease 3C from Human enterovirus 71 (EV71), preventing GSDMD-mediated pyroptosis. In terms of processing, (Microbial infection) Cleaved and inactivated by the 3C-like proteinase nsp5 from human coronavirus SARS-CoV-2, preventing GSDMD-mediated pyroptosis. Post-translationally, (Microbial infection) Ubiquitinated by S.flexneri IpaH7.8, leading to its degradation by the proteasome. As to expression, expressed in the suprabasal cells of esophagus, as well as in the isthmus/neck, pit, and gland of the stomach, suggesting preferential expression in differentiating cells.

It is found in the cytoplasm. Its subcellular location is the cytosol. The protein resides in the inflammasome. The protein localises to the cell membrane. It localises to the secreted. It is found in the mitochondrion membrane. Its subcellular location is the nucleus. Its activity is regulated as follows. The full-length protein before cleavage is inactive: intramolecular interactions between N- and C-terminal domains mediate autoinhibition in the absence of activation signal. The intrinsic pyroptosis-inducing activity is carried by the released N-terminal moiety (Gasdermin-D, N-terminal) following cleavage by caspases CASP1, CASP4, CASP5 or CASP8. Cleavage at Asp-87 by CASP3 or CASP7 inactivates the ability to mediate pyroptosis. Homooligomerization and pore formation is specifically inhibited by VHH(GSDMD-1) and, to a lesser extent, VHH(GSDMD-2) nanobodies, protecting against excessive pyroptosis. Inhibited by small molecule NU6300, which covalently reacts with Cys-191, thereby preventing palmitoylation and pyroptosis. In terms of biological role, precursor of a pore-forming protein that plays a key role in host defense against pathogen infection and danger signals. This form constitutes the precursor of the pore-forming protein: upon cleavage, the released N-terminal moiety (Gasdermin-D, N-terminal) binds to membranes and forms pores, triggering pyroptosis. Functionally, promotes pyroptosis in response to microbial infection and danger signals. Produced by the cleavage of gasdermin-D by inflammatory caspases CASP1, CASP4 or CASP5 in response to canonical, as well as non-canonical (such as cytosolic LPS) inflammasome activators. After cleavage, moves to the plasma membrane where it strongly binds to inner leaflet lipids, including monophosphorylated phosphatidylinositols, such as phosphatidylinositol 4-phosphate, bisphosphorylated phosphatidylinositols, such as phosphatidylinositol (4,5)-bisphosphate, as well as phosphatidylinositol (3,4,5)-bisphosphate, and more weakly to phosphatidic acid and phosphatidylserine. Homooligomerizes within the membrane and forms pores of 10-15 nanometers (nm) of inner diameter, allowing the release of mature interleukin-1 (IL1B and IL18) and triggering pyroptosis. Gasdermin pores also allow the release of mature caspase-7 (CASP7). In some, but not all, cells types, pyroptosis is followed by pyroptotic cell death, which is caused by downstream activation of ninjurin-1 (NINJ1), which mediates membrane rupture (cytolysis). Also forms pores in the mitochondrial membrane, resulting in release of mitochondrial DNA (mtDNA) into the cytosol. Gasdermin-D, N-terminal released from pyroptotic cells into the extracellular milieu rapidly binds to and kills both Gram-negative and Gram-positive bacteria, without harming neighboring mammalian cells, as it does not disrupt the plasma membrane from the outside due to lipid-binding specificity. Under cell culture conditions, also active against intracellular bacteria, such as Listeria monocytogenes. Also active in response to MAP3K7/TAK1 inactivation by Yersinia toxin YopJ, which triggers cleavage by CASP8 and subsequent activation. Required for mucosal tissue defense against enteric pathogens. Activation of the non-canonical inflammasome in brain endothelial cells can lead to excessive pyroptosis, leading to blood-brain barrier breakdown. Strongly binds to bacterial and mitochondrial lipids, including cardiolipin. Does not bind to unphosphorylated phosphatidylinositol, phosphatidylethanolamine nor phosphatidylcholine. Transcription coactivator produced by the cleavage by CASP3 or CASP7 in the upper small intestine in response to dietary antigens. Required to maintain food tolerance in small intestine: translocates to the nucleus and acts as a coactivator for STAT1 to induce the transcription of CIITA and MHC class II molecules, which in turn induce type 1 regulatory T (Tr1) cells in upper small intestine. Its function is as follows. Produced by the cleavage by papain allergen. After cleavage, moves to the plasma membrane and homooligomerizes within the membrane and forms pores of 10-15 nanometers (nm) of inner diameter, allowing the specific release of mature interleukin-33 (IL33), promoting type 2 inflammatory immune response. This is Gasdermin-D from Homo sapiens (Human).